The chain runs to 119 residues: Ethylene-responsive proteinase inhibitor 1 (119 aa).

Residues 1-27 form the signal peptide; sequence MEANKSMVKLVAFLIILVSSCFQSLTA. Residues 28 to 48 constitute a propeptide that is removed on maturation; the sequence is QDLEIEVSDGLNVLQVHDVSQ.

The protein belongs to the protease inhibitor I13 (potato type I serine protease inhibitor) family.

It is found in the secreted. The polypeptide is Ethylene-responsive proteinase inhibitor 1 (Solanum lycopersicum (Tomato)).